Reading from the N-terminus, the 322-residue chain is Elongation factor P--(R)-beta-lysine ligase (322 aa).

72–74 is a binding site for substrate; it reads SPE. Residues 96 to 98 and N106 each bind ATP; that span reads RNN. Y115 contacts substrate. 241–242 is an ATP binding site; it reads EL. E248 serves as a coordination point for substrate. G297 provides a ligand contact to ATP.

This sequence belongs to the class-II aminoacyl-tRNA synthetase family. EpmA subfamily. In terms of assembly, homodimer.

It catalyses the reaction D-beta-lysine + L-lysyl-[protein] + ATP = N(6)-((3R)-3,6-diaminohexanoyl)-L-lysyl-[protein] + AMP + diphosphate + H(+). Its function is as follows. With EpmB is involved in the beta-lysylation step of the post-translational modification of translation elongation factor P (EF-P). Catalyzes the ATP-dependent activation of (R)-beta-lysine produced by EpmB, forming a lysyl-adenylate, from which the beta-lysyl moiety is then transferred to the epsilon-amino group of a conserved specific lysine residue in EF-P. In Buchnera aphidicola subsp. Baizongia pistaciae (strain Bp), this protein is Elongation factor P--(R)-beta-lysine ligase.